A 413-amino-acid chain; its full sequence is 3-isopropylmalate dehydratase large subunit (413 aa).

Residues Cys-295, Cys-353, and Cys-356 each coordinate [4Fe-4S] cluster.

Belongs to the aconitase/IPM isomerase family. LeuC type 2 subfamily. In terms of assembly, heterodimer of LeuC and LeuD. [4Fe-4S] cluster is required as a cofactor.

The catalysed reaction is (2R,3S)-3-isopropylmalate = (2S)-2-isopropylmalate. The protein operates within amino-acid biosynthesis; L-leucine biosynthesis; L-leucine from 3-methyl-2-oxobutanoate: step 2/4. Its function is as follows. Catalyzes the isomerization between 2-isopropylmalate and 3-isopropylmalate, via the formation of 2-isopropylmaleate. The sequence is that of 3-isopropylmalate dehydratase large subunit from Pyrobaculum calidifontis (strain DSM 21063 / JCM 11548 / VA1).